An 876-amino-acid polypeptide reads, in one-letter code: Xylosyltransferase oxt (876 aa).

Residues M1 to R14 lie on the Cytoplasmic side of the membrane. Residues A15–L35 form a helical; Signal-anchor for type II membrane protein membrane-spanning segment. Topologically, residues D36–K876 are lumenal. The segment at A48–P67 is disordered. 4 disulfide bridges follow: C83–C111, C127–C465, C484–C497, and C486–C495. 2 N-linked (GlcNAc...) asparagine glycosylation sites follow: N131 and N135. Positions A134–G228 constitute a WSC domain. UDP-alpha-D-xylose contacts are provided by residues D283 and T312–W314. N342 is a glycosylation site (N-linked (GlcNAc...) asparagine). D415–W416 is a UDP-alpha-D-xylose binding site. UDP-alpha-D-xylose-binding positions include S498 and R522 to K523. N-linked (GlcNAc...) asparagine glycans are attached at residues N696 and N725. The cysteines at positions 842 and 855 are disulfide-linked.

It belongs to the glycosyltransferase 14 family. XylT subfamily. Ca(2+) serves as cofactor. The cofactor is Mn(2+). Mg(2+) is required as a cofactor.

The protein resides in the endoplasmic reticulum membrane. The protein localises to the golgi apparatus membrane. The catalysed reaction is UDP-alpha-D-xylose + L-seryl-[protein] = 3-O-(beta-D-xylosyl)-L-seryl-[protein] + UDP + H(+). Its pathway is glycan metabolism; chondroitin sulfate biosynthesis. It functions in the pathway glycan metabolism; heparan sulfate biosynthesis. Catalyzes the first step in biosynthesis of glycosaminoglycan. Transfers D-xylose from UDP-D-xylose to specific serine residues of the core protein. The chain is Xylosyltransferase oxt from Drosophila melanogaster (Fruit fly).